Consider the following 144-residue polypeptide: Ig heavy chain V region M167 (144 aa).

Residues 1–19 (MKMWLNWVFLLTLLHGIQC) form the signal peptide. Positions 20–133 (EVKVVESGGG…GNSYFGYFDV (114 aa)) constitute an Ig-like domain.

The protein is Ig heavy chain V region M167 of Mus musculus (Mouse).